The primary structure comprises 288 residues: Cell division protein ZipA (288 aa).

Residue M1 is a topological domain, periplasmic. A helical membrane pass occupies residues 2-22 (EIGLREWLIVIGIIVIAGILF). Topologically, residues 23 to 288 (DGWRRMRGGK…FERRALTQKR (266 aa)) are cytoplasmic. Basic and acidic residues-rich tracts occupy residues 66-75 (KEPQLDEHDL) and 83-93 (REAREPRESGS). The disordered stretch occupies residues 66–141 (KEPQLDEHDL…AKSSPAVADK (76 aa)). The segment covering 106–117 (GDLNLDLDLDGG) has biased composition (low complexity).

It belongs to the ZipA family. In terms of assembly, interacts with FtsZ via their C-terminal domains.

The protein localises to the cell inner membrane. Its function is as follows. Essential cell division protein that stabilizes the FtsZ protofilaments by cross-linking them and that serves as a cytoplasmic membrane anchor for the Z ring. Also required for the recruitment to the septal ring of downstream cell division proteins. This is Cell division protein ZipA from Pseudomonas fluorescens (strain Pf0-1).